The primary structure comprises 432 residues: Trigger factor (432 aa).

Positions 161–246 (GTRATINFVG…VVKVEARELP (86 aa)) constitute a PPIase FKBP-type domain.

Belongs to the FKBP-type PPIase family. Tig subfamily.

It is found in the cytoplasm. The catalysed reaction is [protein]-peptidylproline (omega=180) = [protein]-peptidylproline (omega=0). In terms of biological role, involved in protein export. Acts as a chaperone by maintaining the newly synthesized protein in an open conformation. Functions as a peptidyl-prolyl cis-trans isomerase. This is Trigger factor from Aliivibrio fischeri (strain MJ11) (Vibrio fischeri).